The chain runs to 482 residues: uncharacterized protein (482 aa).

WD repeat units follow at residues D92 to I133 and G191 to K230.

The protein localises to the cytoplasm. It localises to the nucleus. This is an uncharacterized protein from Schizosaccharomyces pombe (strain 972 / ATCC 24843) (Fission yeast).